Reading from the N-terminus, the 115-residue chain is MSEQITSAKATAKTVRTSPRKARLVIDLIRGKSVADAISILKFTPNKSAGIIEKVLMSAVANAENNFDLDVESLVVSEAFVNEGPTMKRFRPRAKGSASPINKRTSHITVVVTEK.

Belongs to the universal ribosomal protein uL22 family. Part of the 50S ribosomal subunit.

In terms of biological role, this protein binds specifically to 23S rRNA; its binding is stimulated by other ribosomal proteins, e.g. L4, L17, and L20. It is important during the early stages of 50S assembly. It makes multiple contacts with different domains of the 23S rRNA in the assembled 50S subunit and ribosome. The globular domain of the protein is located near the polypeptide exit tunnel on the outside of the subunit, while an extended beta-hairpin is found that lines the wall of the exit tunnel in the center of the 70S ribosome. In Enterococcus faecalis (strain ATCC 700802 / V583), this protein is Large ribosomal subunit protein uL22.